A 142-amino-acid polypeptide reads, in one-letter code: Hemoglobin subunit alpha-1 (142 aa).

The region spanning 2-142 (VLSAADKSNV…VSTVLTSKYR (141 aa)) is the Globin domain. His59 lines the O2 pocket. His88 serves as a coordination point for heme b.

Belongs to the globin family. Heterotetramer of two alpha chains and two beta chains.

Functionally, involved in oxygen transport from the lung to the various peripheral tissues. In terms of biological role, hemopressin acts as an antagonist peptide of the cannabinoid receptor CNR1. Hemopressin-binding efficiently blocks cannabinoid receptor CNR1 and subsequent signaling. In Capra hircus (Goat), this protein is Hemoglobin subunit alpha-1 (HBA1).